The primary structure comprises 1586 residues: Pentafunctional AROM polypeptide (1586 aa).

The interval M1 to N384 is 3-dehydroquinate synthase. Residues D44–N46, E81–K84, G114–V116, and D119 each bind NAD(+). R130 provides a ligand contact to 7-phospho-2-dehydro-3-deoxy-D-arabino-heptonate. T139–T140 lines the NAD(+) pocket. 7-phospho-2-dehydro-3-deoxy-D-arabino-heptonate-binding residues include D146 and K152. An NAD(+)-binding site is contributed by K161. N162 is a binding site for 7-phospho-2-dehydro-3-deoxy-D-arabino-heptonate. NAD(+) contacts are provided by residues F179 to T182 and N190. Position 194 (E194) interacts with Zn(2+). 7-phospho-2-dehydro-3-deoxy-D-arabino-heptonate is bound by residues E194–K197 and K250. E260 serves as the catalytic Proton acceptor; for 3-dehydroquinate synthase activity. 7-phospho-2-dehydro-3-deoxy-D-arabino-heptonate-binding positions include R264 to N268 and H271. A Zn(2+)-binding site is contributed by H271. The active-site Proton acceptor; for 3-dehydroquinate synthase activity is the H275. 7-phospho-2-dehydro-3-deoxy-D-arabino-heptonate contacts are provided by H287 and K356. H287 provides a ligand contact to Zn(2+). Positions V397–V842 are EPSP synthase. Catalysis depends on C824, which acts as the For EPSP synthase activity. A shikimate kinase region spans residues S864–S1056. G871–T878 contacts ATP. The 3-dehydroquinase stretch occupies residues L1057–E1277. H1180 serves as the catalytic Proton acceptor; for 3-dehydroquinate dehydratase activity. K1208 functions as the Schiff-base intermediate with substrate; for 3-dehydroquinate dehydratase activity in the catalytic mechanism. The tract at residues A1290–F1586 is shikimate dehydrogenase.

It in the N-terminal section; belongs to the sugar phosphate cyclases superfamily. Dehydroquinate synthase family. This sequence in the 2nd section; belongs to the EPSP synthase family. The protein in the 3rd section; belongs to the shikimate kinase family. In the 4th section; belongs to the type-I 3-dehydroquinase family. It in the C-terminal section; belongs to the shikimate dehydrogenase family. As to quaternary structure, homodimer. The cofactor is Zn(2+).

It is found in the cytoplasm. It carries out the reaction 7-phospho-2-dehydro-3-deoxy-D-arabino-heptonate = 3-dehydroquinate + phosphate. The catalysed reaction is 3-dehydroquinate = 3-dehydroshikimate + H2O. It catalyses the reaction shikimate + NADP(+) = 3-dehydroshikimate + NADPH + H(+). The enzyme catalyses shikimate + ATP = 3-phosphoshikimate + ADP + H(+). It carries out the reaction 3-phosphoshikimate + phosphoenolpyruvate = 5-O-(1-carboxyvinyl)-3-phosphoshikimate + phosphate. It participates in metabolic intermediate biosynthesis; chorismate biosynthesis; chorismate from D-erythrose 4-phosphate and phosphoenolpyruvate: step 2/7. Its pathway is metabolic intermediate biosynthesis; chorismate biosynthesis; chorismate from D-erythrose 4-phosphate and phosphoenolpyruvate: step 3/7. The protein operates within metabolic intermediate biosynthesis; chorismate biosynthesis; chorismate from D-erythrose 4-phosphate and phosphoenolpyruvate: step 4/7. It functions in the pathway metabolic intermediate biosynthesis; chorismate biosynthesis; chorismate from D-erythrose 4-phosphate and phosphoenolpyruvate: step 5/7. It participates in metabolic intermediate biosynthesis; chorismate biosynthesis; chorismate from D-erythrose 4-phosphate and phosphoenolpyruvate: step 6/7. The AROM polypeptide catalyzes 5 consecutive enzymatic reactions in prechorismate polyaromatic amino acid biosynthesis. This Penicillium rubens (strain ATCC 28089 / DSM 1075 / NRRL 1951 / Wisconsin 54-1255) (Penicillium chrysogenum) protein is Pentafunctional AROM polypeptide.